The chain runs to 284 residues: 4-diphosphocytidyl-2-C-methyl-D-erythritol kinase (284 aa).

Lys-9 is an active-site residue. Residue 90–100 (PLVSGLGGDSS) coordinates ATP. Residue Asp-132 is part of the active site.

The protein belongs to the GHMP kinase family. IspE subfamily.

It catalyses the reaction 4-CDP-2-C-methyl-D-erythritol + ATP = 4-CDP-2-C-methyl-D-erythritol 2-phosphate + ADP + H(+). It participates in isoprenoid biosynthesis; isopentenyl diphosphate biosynthesis via DXP pathway; isopentenyl diphosphate from 1-deoxy-D-xylulose 5-phosphate: step 3/6. In terms of biological role, catalyzes the phosphorylation of the position 2 hydroxy group of 4-diphosphocytidyl-2C-methyl-D-erythritol. The sequence is that of 4-diphosphocytidyl-2-C-methyl-D-erythritol kinase from Dehalococcoides mccartyi (strain ATCC BAA-2100 / JCM 16839 / KCTC 5957 / BAV1).